The following is a 1397-amino-acid chain: Clustered mitochondria protein homolog (1397 aa).

The stretch at 30–63 is one TPR 1 repeat; that stretch reads LPSFIDQKGDLKIPSHYEETITDLKLTLTVIPKT. Disordered stretches follow at residues 158-203 and 526-555; these read TARG…LSRE and DAAP…DEEE. The segment covering 161–203 has biased composition (basic and acidic residues); that stretch reads GEAEKSDTNEEEQEQGKGKVGKPNEKESGETKETDSQPELSRE. Residues 368–640 form the Clu domain; it reads DSSRSQLMLI…RTTPRDIEFI (273 aa). One copy of the TPR 2 repeat lies at 559–595; sequence EKVLYGLSSDSQKILEDKSFEKPLKLLSEVFHLKPHG. 4 stretches are compositionally biased toward basic and acidic residues: residues 686–703, 812–831, 839–860, and 1019–1033; these read EGKL…EEKS, EKVE…KERA, SDDK…NTES, and QREQ…NVEK. 3 disordered regions span residues 686–707, 812–869, and 1019–1050; these read EGKL…QIAL, EKVE…EEQP, and QREQ…PIEN. Positions 1034–1043 are enriched in basic residues; sequence KHSKKSKKKS. 2 TPR repeats span residues 1167–1200 and 1209–1242; these read IAAY…WTST and VNLL…CSHL. Polar residues-rich tracts occupy residues 1314–1338 and 1362–1373; these read AQSK…SQAS and PQSDPQIANQSV. Residues 1314 to 1397 form a disordered region; that stretch reads AQSKKSPPPT…AKSKSKHTKA (84 aa). Basic and acidic residues predominate over residues 1375–1384; sequence DILKFIEGKS. Over residues 1386–1397 the composition is skewed to basic residues; the sequence is PNAKSKSKHTKA.

It belongs to the CLU family. May associate with the eukaryotic translation initiation factor 3 (eIF-3) complex.

The protein localises to the cytoplasm. MRNA-binding protein involved in proper cytoplasmic distribution of mitochondria. This is Clustered mitochondria protein homolog from Lodderomyces elongisporus (strain ATCC 11503 / CBS 2605 / JCM 1781 / NBRC 1676 / NRRL YB-4239) (Yeast).